We begin with the raw amino-acid sequence, 607 residues long: CRISPR-associated DNA-binding protein Cas12m (607 aa).

A wedge domain (WED-N) region spans residues 1–16; the sequence is MTRVTVQTAGVHYKWQ. Residues 17 to 189 form a recognition domain (REC) region; the sequence is MPDQLTQQLR…QLRHHRWDGT (173 aa). The segment at 50 to 124 is roof in REC; it reads WSSYPAVAAL…IASVRDEATE (75 aa). Residues 74-83 are compositionally biased toward basic and acidic residues; the sequence is ASTVKEEKSR. The tract at residues 74 to 94 is disordered; sequence ASTVKEEKSRQRTKRPSHPAV. The tract at residues 190–315 is wedge domain (WED-C); the sequence is GTISVQLQRQ…KIPDQGEVDE (126 aa). Residues 316 to 559 form a ruvC-I region; that stretch reads GPTIAVHLGW…TVSHTGLSRV (244 aa). Residues 391–452 form a ruvC insertion region; the sequence is SIRDTLVAWL…EGADIAETLE (62 aa). The segment at 552–588 is target nucleic-acid binding (TNB); the sequence is SHTGLSRVHAACGHENPADDRYLMQPVLCDGCGRTYD. Zn(2+) is bound by residues His560, Cys563, Cys580, and Cys583. The interval 589–607 is ruvC-II; the sequence is TDLSATILMLQRASAATSN. Asp590 is a Mg(2+) binding site.

It belongs to the CRISPR-associated DNA-binding protein Cas12m family. As to quaternary structure, binds crRNA and target dsDNA as a monomer. It depends on Mg(2+) as a cofactor. The cofactor is Zn(2+).

In terms of biological role, CRISPR (clustered regularly interspaced short palindromic repeat), is an adaptive immune system that provides protection against mobile genetic elements (viruses, transposable elements and conjugative plasmids). CRISPR clusters contain sequences complementary to antecedent mobile elements and target invading nucleic acids. CRISPR clusters are transcribed and processed into CRISPR RNA (crRNA). Recognizes a short motif in the CRISPR repeat sequences (the 5' PAM or protospacer adjacent motif, 5'-TTN-3' in this organism) to help distinguish self versus nonself, as targets within the bacterial CRISPR locus do not have PAMs. Upon expression in E.coli as a CRISPR locus inhibits plasmid propagation when targeted to regions essential for plasmid propagation (replication origin and a selectable marker); inhibits expression of a non-selectable marker, probably at the transcriptional level. Protects E.coli against bacteriophage M13mp18, to a lesser extent against lambda and VpaE1 as well as phage T4 with hydroxymethyl or unmodified (but not glycosylated) cytosines. Preferentially binds to its associated crRNA. Cas12m-crRNA binds DNA in a PAM-dependent, crRNA-guided fashion. Binds a 20-bp crRNA-ss-target DNA heteroduplex, in a 52 nucleotide crRNA. No dsDNA, ssDNA or RNA nuclease activity is seen for the crRNA-Cas12m complex. Probably required for pre-crRNA processing to mature crRNA. The polypeptide is CRISPR-associated DNA-binding protein Cas12m (Gordonia otitidis (strain DSM 44809 / CCUG 52243 / JCM 12355 / NBRC 100426 / IFM 10032)).